Here is a 1088-residue protein sequence, read N- to C-terminus: Protocadherin-19 (1088 aa).

Residues 1 to 24 (MHSKDMDFVQMFVCFLLCWTGVDA) form the signal peptide. Topologically, residues 25–678 (VFNLKYTVEE…QEQIGPVNLS (654 aa)) are extracellular. Cadherin domains follow at residues 31–130 (TVEE…APRF), 131–239 (PTNH…NPVF), 240–347 (DEPV…APEI), 351–454 (SENS…PPYF), 455–563 (TKPH…TPVM), and 569–676 (VNGT…GPVN). Positions 34 and 35 each coordinate Ca(2+). Asn-44 is a glycosylation site (N-linked (GlcNAc...) asparagine). 2 residues coordinate Ca(2+): Asp-89 and Asp-91. The cysteines at positions 94 and 100 are disulfide-linked. Ca(2+) is bound by residues Asp-122, Val-123, Asn-124, Asp-125, Asn-126, Glu-141, Asp-156, Asp-158, Asn-162, Glu-200, Asp-213, Asp-231, Ser-232, Asn-233, Asp-234, Asn-235, and Glu-250. An N-linked (GlcNAc...) asparagine glycan is attached at Asn-262. 3 residues coordinate Ca(2+): Asp-265, Asp-267, and Asn-271. An N-linked (GlcNAc...) asparagine glycan is attached at Asn-284. The Ca(2+) site is built by Asp-306, Glu-308, Asp-339, Ile-340, Asn-341, Asp-342, Asn-343, Glu-361, and Asp-376. The N-linked (GlcNAc...) asparagine glycan is linked to Asn-377. Ca(2+) contacts are provided by Asp-378, Asn-382, Asp-413, and Glu-415. Residue Asn-421 is glycosylated (N-linked (GlcNAc...) asparagine). Ca(2+)-binding residues include Asp-428, Asp-446, Glu-447, Asn-448, Asp-449, Asn-450, Glu-465, Asp-480, Asp-482, Asn-486, Asn-522, Glu-524, and Asp-537. Asn-486 is a glycosylation site (N-linked (GlcNAc...) asparagine). A glycan (N-linked (GlcNAc...) asparagine) is linked at Asn-546. Ca(2+) contacts are provided by Asp-555, Val-556, Asn-557, Asp-558, and Asn-559. An N-linked (GlcNAc...) asparagine glycan is attached at Asn-570. Ca(2+) contacts are provided by Asp-594, Asp-596, Asn-600, and Asp-646. N-linked (GlcNAc...) asparagine glycosylation occurs at Asn-676. A helical transmembrane segment spans residues 679–699 (LIFIIALGSIAVILFVTMIFV). The Cytoplasmic segment spans residues 700-1088 (AVKCKRDNKE…GSKRLKDIVL (389 aa)). 4 disordered regions span residues 792 to 813 (NSRN…GPQQ), 851 to 875 (DMEG…HDVQ), 970 to 1032 (TFGK…ASST), and 1067 to 1088 (TLLQ…DIVL). Positions 859 to 875 (DSGHEESDQTDSEHDVQ) are enriched in basic and acidic residues. Positions 1071–1088 (DGRDKESPGSKRLKDIVL) are enriched in basic and acidic residues.

As to quaternary structure, homodimer; antiparallel. Interacts with cadherin cdh2; the interaction confers robust cell adhesion activity on pcdh19. As to expression, in the embryo, strongly expressed in the developing nervous system. At 12 hours post fertilization (hpf), shows a segmental expression pattern in the anterior third of the neural keel with strong expression in the presumptive forebrain, cerebellum/rhombomere 1 and rhombomere 4. By 24 hpf, expressed widely in the brain and spinal cord with higher expression levels in the ventral telencephalon, dorsal and central thalamus, optic tectum, central tegmentum, cerebellum and dorsolateral regions of the hindbrain. As development proceeds, expression becomes restricted to the dorsal and/or lateral regions of the central nervous system. Not detected in the spinal cord of two- and three-day old embryos. Expressed in the eye primordium, developing retina, lens and otic vesicle. Expressed in the larval optic tectum at 4 days post-fertilization where it localizes in discrete columns of neurons. Expressed throughout the adult brain with strong expression in the ventromedial telencephalon, periventricular regions of the thalamus and anterior hypothalamus, stratum periventriculare of the optic tectum, dorsal tegmental nucleus, granular regions of the cerebellar body and valvula, and superficial layers of the facial and vagal lobes.

It is found in the cell membrane. Calcium-dependent cell-adhesion protein. Essential for the early stages of neurulation in the anterior neural plate. Shows little cell adhesion activity on its own but exhibits robust homophilic cell adhesion when in a complex with cadherin cdh2 and appears to mediate the adhesion while cdh2 acts as a cell adhesion cofactor in the complex. Functions with cdh2 to coordinate cell adhesion and cell movements during neurulation. Contributes to neural progenitor cell patterning with cdh2 by promoting homophilic cell interactions. Regulates the columnar organization of neurons in the optic tectum. This is Protocadherin-19 from Danio rerio (Zebrafish).